We begin with the raw amino-acid sequence, 161 residues long: Non-secretory ribonuclease (161 aa).

The signal sequence occupies residues 1–27; the sequence is MVPKLFTSQICLLLLLGLLAVEGSLHV. C-linked (Man) tryptophan glycosylation is present at tryptophan 34. The active-site Proton acceptor is the histidine 42. Asparagine 44 carries an N-linked (GlcNAc...) asparagine glycan. 4 disulfides stabilise this stretch: cysteine 50–cysteine 110, cysteine 64–cysteine 123, cysteine 82–cysteine 138, and cysteine 89–cysteine 98. Tyrosine 60 carries the post-translational modification 3'-nitrotyrosine. 65–69 contributes to the substrate binding site; sequence KNQNT. Residues asparagine 86, asparagine 92, asparagine 111, and asparagine 119 are each glycosylated (N-linked (GlcNAc...) asparagine). Catalysis depends on histidine 156, which acts as the Proton donor.

The protein belongs to the pancreatic ribonuclease family. Interacts with and forms a tight 1:1 complex with RNH1. Dimerization of two such complexes may occur.

It is found in the lysosome. The protein resides in the cytoplasmic granule. The catalysed reaction is an [RNA] containing cytidine + H2O = an [RNA]-3'-cytidine-3'-phosphate + a 5'-hydroxy-ribonucleotide-3'-[RNA].. It carries out the reaction an [RNA] containing uridine + H2O = an [RNA]-3'-uridine-3'-phosphate + a 5'-hydroxy-ribonucleotide-3'-[RNA].. Its function is as follows. This is a non-secretory ribonuclease. It is a pyrimidine specific nuclease with a slight preference for U. Cytotoxin and helminthotoxin. Possesses a wide variety of biological activities. The protein is Non-secretory ribonuclease (RNASE2) of Gorilla gorilla gorilla (Western lowland gorilla).